Consider the following 469-residue polypeptide: Serine hydroxymethyltransferase, cytosolic (469 aa).

Phosphothreonine is present on threonine 20. Serine 26 is subject to Phosphoserine. Residue lysine 248 is modified to N6-(pyridoxal phosphate)lysine. The residue at position 429 (serine 429) is a Phosphoserine. Lysine 456 is covalently cross-linked (Glycyl lysine isopeptide (Lys-Gly) (interchain with G-Cter in ubiquitin)).

The protein belongs to the SHMT family. In terms of assembly, homotetramer. Pyridoxal 5'-phosphate is required as a cofactor.

The protein localises to the cytoplasm. The enzyme catalyses (6R)-5,10-methylene-5,6,7,8-tetrahydrofolate + glycine + H2O = (6S)-5,6,7,8-tetrahydrofolate + L-serine. It participates in one-carbon metabolism; tetrahydrofolate interconversion. Its function is as follows. Interconversion of serine and glycine. In Saccharomyces cerevisiae (strain ATCC 204508 / S288c) (Baker's yeast), this protein is Serine hydroxymethyltransferase, cytosolic.